We begin with the raw amino-acid sequence, 400 residues long: Argininosuccinate synthase (400 aa).

Residues Ala10–Ser18 and Ala38 each bind ATP. Tyr89 contributes to the L-citrulline binding site. Gly119 lines the ATP pocket. The L-aspartate site is built by Thr121, Asn125, and Asp126. Asn125 contacts L-citrulline. The L-citrulline site is built by Arg129, Ser177, Ser186, Glu262, and Tyr274.

Belongs to the argininosuccinate synthase family. Type 1 subfamily. As to quaternary structure, homotetramer.

It localises to the cytoplasm. It catalyses the reaction L-citrulline + L-aspartate + ATP = 2-(N(omega)-L-arginino)succinate + AMP + diphosphate + H(+). Its pathway is amino-acid biosynthesis; L-arginine biosynthesis; L-arginine from L-ornithine and carbamoyl phosphate: step 2/3. This Synechococcus elongatus (strain ATCC 33912 / PCC 7942 / FACHB-805) (Anacystis nidulans R2) protein is Argininosuccinate synthase.